A 212-amino-acid chain; its full sequence is Thymidylate kinase (212 aa).

Position 2 is an N-acetylalanine (Ala2). ATP contacts are provided by residues 16-21 (RAGKTT) and Arg97. The tract at residues 133–157 (LQLQLLDAAARGEFGLERYETGTFQ) is LID. ATP is bound by residues Lys182 and Arg192.

It belongs to the thymidylate kinase family. As to quaternary structure, homodimer. Mg(2+) serves as cofactor.

It carries out the reaction dTMP + ATP = dTDP + ADP. Its pathway is pyrimidine metabolism; dTTP biosynthesis. In terms of biological role, catalyzes the phosphorylation of thymidine monophosphate (dTMP) to thymidine diphosphate (dTDP), the immediate precursor for the DNA building block dTTP, with ATP as the preferred phosphoryl donor in the presence of Mg(2+). The protein is Thymidylate kinase (Dtymk) of Mus musculus (Mouse).